Consider the following 463-residue polypeptide: Putative pentatricopeptide repeat-containing protein At4g17915 (463 aa).

12 PPR repeats span residues 12–46, 47–81, 82–116, 117–152, 153–186, 187–221, 222–256, 257–291, 292–326, 327–361, 362–392, and 393–427; these read STRL…GVDP, DVVT…GIRP, DVAT…GIYP, DLWS…GLNP, GPDT…RFKP, ELMT…GYTP, NAVT…GYTY, DGYA…GRRH, DIVS…GMKA, DEYT…GIGL, NLVT…MEVK, and DEYT…GIKI.

It belongs to the PPR family. P subfamily.

This is Putative pentatricopeptide repeat-containing protein At4g17915 from Arabidopsis thaliana (Mouse-ear cress).